The chain runs to 376 residues: Ribonucleoside-diphosphate reductase subunit beta (376 aa).

Asp-85, Glu-116, and His-119 together coordinate Fe cation. Tyr-123 is an active-site residue. Positions 205, 239, and 242 each coordinate Fe cation.

The protein belongs to the ribonucleoside diphosphate reductase small chain family. In terms of assembly, tetramer of two alpha and two beta subunits. It depends on Fe cation as a cofactor.

It carries out the reaction a 2'-deoxyribonucleoside 5'-diphosphate + [thioredoxin]-disulfide + H2O = a ribonucleoside 5'-diphosphate + [thioredoxin]-dithiol. In terms of biological role, provides the precursors necessary for DNA synthesis. Catalyzes the biosynthesis of deoxyribonucleotides from the corresponding ribonucleotides. This chain is Ribonucleoside-diphosphate reductase subunit beta (nrdB), found in Buchnera aphidicola subsp. Baizongia pistaciae (strain Bp).